The sequence spans 321 residues: Nucleotide-binding protein GOX0815 (321 aa).

Residue 27 to 34 (GLSGAGKS) participates in ATP binding. 72–75 (DVRS) is a GTP binding site.

This sequence belongs to the RapZ-like family.

In terms of biological role, displays ATPase and GTPase activities. The protein is Nucleotide-binding protein GOX0815 of Gluconobacter oxydans (strain 621H) (Gluconobacter suboxydans).